Reading from the N-terminus, the 127-residue chain is Protein KRTCAP2 homolog (127 aa).

A run of 4 helical transmembrane segments spans residues 13-33 (LISLILWVIIFALLNIGSNFF), 41-61 (ILGGFVGSFLFFLQMTFIGAI), 65-85 (VKLLETVLAVIITAMISSSVH), and 87-107 (VSGTTSIIFSIGWIFYLNHAS).

Belongs to the KRTCAP2 family. As to quaternary structure, component of the oligosaccharyltransferase (OST) complex.

The protein localises to the membrane. Its function is as follows. Subunit of the oligosaccharyl transferase (OST) complex that catalyzes the initial transfer of a defined glycan (Glc(3)Man(9)GlcNAc(2) in eukaryotes) from the lipid carrier dolichol-pyrophosphate to an asparagine residue within an Asn-X-Ser/Thr consensus motif in nascent polypeptide chains, the first step in protein N-glycosylation. N-glycosylation occurs cotranslationally and the complex associates with the Sec61 complex at the channel-forming translocon complex that mediates protein translocation across the endoplasmic reticulum (ER). All subunits are required for a maximal enzyme activity. The sequence is that of Protein KRTCAP2 homolog from Dictyostelium discoideum (Social amoeba).